An 816-amino-acid polypeptide reads, in one-letter code: Probable disease resistance protein At4g33300 (816 aa).

An RPW8 domain is found at 1 to 149; it reads MAITDFFAGE…SLDRVIQQVG (149 aa). Residues 95-111 are a coiled coil; it reads TLARKMEKLEKTISNFL. The 253-residue stretch at 191 to 443 folds into the NB-ARC domain; the sequence is VKKMMFESQG…LDVLINIWIE (253 aa). 207–214 lines the ATP pocket; sequence GMGGVGKT. Residues 399 to 415 adopt a coiled-coil conformation; sequence SRLLRQMEASLDNLDQT. LRR repeat units lie at residues 681 to 704, 705 to 727, 729 to 751, and 753 to 774; these read SLSC…SKLQ, ALEI…ICEL, GLKY…IGKL, and KLEK…AVSL.

The protein belongs to the disease resistance NB-LRR family.

Functionally, probable disease resistance protein. In Arabidopsis thaliana (Mouse-ear cress), this protein is Probable disease resistance protein At4g33300.